The sequence spans 181 residues: uncharacterized protein (181 aa).

The Cytoplasmic portion of the chain corresponds to 1 to 14 (MQKCIMRSTEFKTH). Residues 15-35 (FSFHSIFSFPLSAALLALISA) form a helical membrane-spanning segment. The Extracellular portion of the chain corresponds to 36–58 (SEPASKAFINVQFISSPLVKKEV). The chain crosses the membrane as a helical span at residues 59 to 79 (LPFIVSFHSLSSNGILSFSPF). Topologically, residues 80–84 (TSSNL) are cytoplasmic. The chain crosses the membrane as a helical span at residues 85-105 (SIAQLPFLIKVPLLSMGSLAL). Topologically, residues 106 to 116 (ENFNKFIPRAD) are extracellular. A helical transmembrane segment spans residues 117 to 137 (LVAAWVTIIMVFTFGNFLSTL). Over 138–153 (SIKTGQNLWHLSKISS) the chain is Cytoplasmic. A helical transmembrane segment spans residues 154 to 174 (SVSPLLLGIILGSQSGEIMLG). Residues 175-181 (KNLLITS) are Extracellular-facing.

It localises to the membrane. This is an uncharacterized protein from Saccharomyces cerevisiae (strain ATCC 204508 / S288c) (Baker's yeast).